Consider the following 343-residue polypeptide: Mesaconyl-CoA hydratase (343 aa).

Residues 47–116 (SDEFARACGL…STVIGLKENS (70 aa)) form the MaoC-like domain. Residues 60 to 63 (PVDE), 83 to 86 (VANL), and 94 to 96 (LKP) contribute to the substrate site.

The catalysed reaction is (2R,3S)-beta-methylmalyl-CoA = 2-methylfumaryl-CoA + H2O. Functionally, involved in the ethylmalonyl-CoA pathway for acetate assimilation. Catalyzes the reversible hydration of mesaconyl-CoA (2-methylfumaryl-CoA) to yield beta-methylmalyl-CoA ((2R,3S)-beta-methylmalyl-CoA). The protein is Mesaconyl-CoA hydratase (mch) of Cereibacter sphaeroides (strain ATCC 17023 / DSM 158 / JCM 6121 / CCUG 31486 / LMG 2827 / NBRC 12203 / NCIMB 8253 / ATH 2.4.1.) (Rhodobacter sphaeroides).